A 330-amino-acid chain; its full sequence is Tryptophan--tRNA ligase (330 aa).

ATP contacts are provided by residues 10–12 (QAT) and 18–19 (GN). Positions 11–19 (ATGSLHLGN) match the 'HIGH' region motif. D134 serves as a coordination point for L-tryptophan. ATP-binding positions include 146–148 (GED), I186, and 195–199 (KMSKS). Positions 195 to 199 (KMSKS) match the 'KMSKS' region motif.

The protein belongs to the class-I aminoacyl-tRNA synthetase family. Homodimer.

Its subcellular location is the cytoplasm. It catalyses the reaction tRNA(Trp) + L-tryptophan + ATP = L-tryptophyl-tRNA(Trp) + AMP + diphosphate + H(+). In terms of biological role, catalyzes the attachment of tryptophan to tRNA(Trp). This is Tryptophan--tRNA ligase from Rickettsia felis (strain ATCC VR-1525 / URRWXCal2) (Rickettsia azadi).